An 83-amino-acid chain; its full sequence is Small ribosomal subunit protein bS16 (83 aa).

The protein belongs to the bacterial ribosomal protein bS16 family.

The chain is Small ribosomal subunit protein bS16 from Verminephrobacter eiseniae (strain EF01-2).